The sequence spans 669 residues: DNA ligase (669 aa).

Residues 34-38 (DAEYD), 83-84 (SL), and Glu114 each bind NAD(+). Lys116 (N6-AMP-lysine intermediate) is an active-site residue. Arg137, Glu171, Lys287, and Lys311 together coordinate NAD(+). Zn(2+) is bound by residues Cys405, Cys408, Cys423, and Cys428. The BRCT domain occupies 591 to 669 (NVESYFAGKT…EERFLQELNK (79 aa)).

Belongs to the NAD-dependent DNA ligase family. LigA subfamily. It depends on Mg(2+) as a cofactor. Mn(2+) serves as cofactor.

It carries out the reaction NAD(+) + (deoxyribonucleotide)n-3'-hydroxyl + 5'-phospho-(deoxyribonucleotide)m = (deoxyribonucleotide)n+m + AMP + beta-nicotinamide D-nucleotide.. DNA ligase that catalyzes the formation of phosphodiester linkages between 5'-phosphoryl and 3'-hydroxyl groups in double-stranded DNA using NAD as a coenzyme and as the energy source for the reaction. It is essential for DNA replication and repair of damaged DNA. This Bacillus cereus (strain AH187) protein is DNA ligase.